Here is a 119-residue protein sequence, read N- to C-terminus: Immunoglobulin heavy variable 2-5 (119 aa).

Positions 1 to 19 are cleaved as a signal peptide; that stretch reads MDTLCSTLLLLTIPSWVLS. Q20 bears the Pyrrolidone carboxylic acid mark. Residues 20-44 are framework-1; sequence QITLKESGPTLVKPTQTLTLTCTFS. Positions 20-119 constitute an Ig-like domain; it reads QITLKESGPT…DTATYYCAHR (100 aa). C41 and C116 are disulfide-bonded. Residues 45 to 54 form a complementarity-determining-1 region; it reads GFSLSTSGVG. A framework-2 region spans residues 55-71; sequence VGWIRQPPGKALEWLAL. The segment at 72-78 is complementarity-determining-2; that stretch reads IYWDDDK. Residues 79-116 are framework-3; that stretch reads RYSPSLKSRLTITKDTSKNQVVLTMTNMDPVDTATYYC. The complementarity-determining-3 stretch occupies residues 117-119; that stretch reads AHR.

As to quaternary structure, immunoglobulins are composed of two identical heavy chains and two identical light chains; disulfide-linked.

The protein resides in the secreted. Its subcellular location is the cell membrane. Functionally, v region of the variable domain of immunoglobulin heavy chains that participates in the antigen recognition. Immunoglobulins, also known as antibodies, are membrane-bound or secreted glycoproteins produced by B lymphocytes. In the recognition phase of humoral immunity, the membrane-bound immunoglobulins serve as receptors which, upon binding of a specific antigen, trigger the clonal expansion and differentiation of B lymphocytes into immunoglobulins-secreting plasma cells. Secreted immunoglobulins mediate the effector phase of humoral immunity, which results in the elimination of bound antigens. The antigen binding site is formed by the variable domain of one heavy chain, together with that of its associated light chain. Thus, each immunoglobulin has two antigen binding sites with remarkable affinity for a particular antigen. The variable domains are assembled by a process called V-(D)-J rearrangement and can then be subjected to somatic hypermutations which, after exposure to antigen and selection, allow affinity maturation for a particular antigen. This chain is Immunoglobulin heavy variable 2-5, found in Homo sapiens (Human).